The primary structure comprises 255 residues: Short chain dehydrogenase adrF (255 aa).

NADP(+) contacts are provided by Ile11, Arg118, Tyr150, Lys154, and Val183. Tyr150 serves as the catalytic Proton acceptor. Lys154 functions as the Lowers pKa of active site Tyr in the catalytic mechanism.

Belongs to the short-chain dehydrogenases/reductases (SDR) family.

It participates in secondary metabolite biosynthesis; terpenoid biosynthesis. Short chain dehydrogenase; part of the gene cluster that mediates the biosynthesis of andrastins, meroterpenoid compounds that exhibit inhibitory activity against ras farnesyltransferase, suggesting that they could be promising leads for antitumor agents. The first step of the pathway is the synthesis of 3,5-dimethylorsellinic acid (DMOA) by the polyketide synthase adrD via condensation of one acetyl-CoA starter unit with 3 malonyl-CoA units and 2 methylations. DMAO is then converted to farnesyl-DMAO by the prenyltransferase adrG. The methyltransferase adrK catalyzes the methylation of the carboxyl group of farnesyl-DMAO to farnesyl-DMAO methyl ester which is further converted to epoxyfarnesyl-DMAO methyl ester by the FAD-dependent monooxygenase adrH. The terpene cyclase adrI then catalyzes the carbon skeletal rearrangement to generate the andrastin E, the first compound in the pathway having the andrastin scaffold, with the tetracyclic ring system. The post-cyclization tailoring enzymes adrF, adrE, adrJ, and adrA, are involved in the conversion of andrastin E into andrastin A. The short chain dehydrogenase adrF is responsible for the oxidation of the C-3 a hydroxyl group of andrastin E to yield the corresponding ketone, andrastin D. The ketoreductase adrE stereoselectively reduces the carbonyl moiety to reverse the stereochemistry of the C-3 position to yield andrastin F. The acetyltransferase adrJ is the acetyltransferase that attaches the acetyl group to the C-3 hydroxyl group of andrastin F to yield andrastin C. Finally, the cytochrome P450 monooxygenase adrA catalyzes two sequential oxidation reactions of the C-23 methyl group, to generate the corresponding alcohol andrastin B, and aldehyde andrastin A. The protein is Short chain dehydrogenase adrF of Penicillium rubens (strain ATCC 28089 / DSM 1075 / NRRL 1951 / Wisconsin 54-1255) (Penicillium chrysogenum).